The following is a 175-amino-acid chain: NADH-ubiquinone oxidoreductase chain 6 (175 aa).

The next 5 membrane-spanning stretches (helical) occupy residues 1 to 21, 25 to 45, 47 to 67, 88 to 108, and 149 to 169; these read MMTYIVFILSVIFVIGFVGFS, SPIYGGLVLIVSGGVGCGIIM, FGGSFLGLMVFLIYLGGMLVV, TVMGVFLLGLLMEVMLVLYVL, and YGAWVVVVTGWSLLVGVLVIL.

This sequence belongs to the complex I subunit 6 family. In terms of assembly, core subunit of respiratory chain NADH dehydrogenase (Complex I) which is composed of 45 different subunits.

It localises to the mitochondrion inner membrane. The enzyme catalyses a ubiquinone + NADH + 5 H(+)(in) = a ubiquinol + NAD(+) + 4 H(+)(out). In terms of biological role, core subunit of the mitochondrial membrane respiratory chain NADH dehydrogenase (Complex I) which catalyzes electron transfer from NADH through the respiratory chain, using ubiquinone as an electron acceptor. Essential for the catalytic activity and assembly of complex I. This is NADH-ubiquinone oxidoreductase chain 6 (MT-ND6) from Equus asinus (Donkey).